A 95-amino-acid polypeptide reads, in one-letter code: uncharacterized protein (95 aa).

This is an uncharacterized protein from Bacillus subtilis (strain 168).